The chain runs to 474 residues: tRNA-2-methylthio-N(6)-dimethylallyladenosine synthase (474 aa).

The 118-residue stretch at 3 to 120 (KKLHIKTWGC…LPEMIDQVQR (118 aa)) folds into the MTTase N-terminal domain. Positions 12, 49, 83, 157, 161, and 164 each coordinate [4Fe-4S] cluster. Residues 143–375 (RADGPTAFVS…QDRITQQAMR (233 aa)) form the Radical SAM core domain. One can recognise a TRAM domain in the interval 378-441 (RQMLGTVQRI…TNSLRGIFIR (64 aa)).

It belongs to the methylthiotransferase family. MiaB subfamily. In terms of assembly, monomer. It depends on [4Fe-4S] cluster as a cofactor.

The protein resides in the cytoplasm. It catalyses the reaction N(6)-dimethylallyladenosine(37) in tRNA + (sulfur carrier)-SH + AH2 + 2 S-adenosyl-L-methionine = 2-methylsulfanyl-N(6)-dimethylallyladenosine(37) in tRNA + (sulfur carrier)-H + 5'-deoxyadenosine + L-methionine + A + S-adenosyl-L-homocysteine + 2 H(+). In terms of biological role, catalyzes the methylthiolation of N6-(dimethylallyl)adenosine (i(6)A), leading to the formation of 2-methylthio-N6-(dimethylallyl)adenosine (ms(2)i(6)A) at position 37 in tRNAs that read codons beginning with uridine. The protein is tRNA-2-methylthio-N(6)-dimethylallyladenosine synthase of Shewanella denitrificans (strain OS217 / ATCC BAA-1090 / DSM 15013).